The sequence spans 709 residues: Methylmalonyl-CoA mutase (709 aa).

Substrate contacts are provided by residues 73–77, 183–185, arginine 195, lysine 222, histidine 232, and 271–273; these read TIRQY, TIQ, and RLS. Residues 579-709 enclose the B12-binding domain; that stretch reads RPRMLVVKMG…ILDLIREARS (131 aa). An adenosylcob(III)alamin-binding site is contributed by histidine 592.

It belongs to the methylmalonyl-CoA mutase family. As to quaternary structure, homodimer. Adenosylcob(III)alamin is required as a cofactor.

The enzyme catalyses (R)-methylmalonyl-CoA = succinyl-CoA. It participates in metabolic intermediate metabolism; propanoyl-CoA degradation; succinyl-CoA from propanoyl-CoA: step 3/3. Radical enzyme that catalyzes the transformation of (2R)-methylmalonyl-CoA to succinyl-CoA. Is involved in the ethylmalonyl-CoA pathway for acetyl-CoA assimilation required for R.sphaeroides growth on acetate as sole carbon source. This is Methylmalonyl-CoA mutase from Cereibacter sphaeroides (strain ATCC 17023 / DSM 158 / JCM 6121 / CCUG 31486 / LMG 2827 / NBRC 12203 / NCIMB 8253 / ATH 2.4.1.) (Rhodobacter sphaeroides).